A 326-amino-acid chain; its full sequence is Vitamin B12 import system permease protein BtuC (326 aa).

The next 9 membrane-spanning stretches (helical) occupy residues 15–35 (WLLCLSVLMLLALLLSLCAGE), 61–81 (LAVLLVGAALAISGAVMQALF), 88–108 (PGLLGVSNGAGVGLIAAVLLG), 112–132 (LPNWALGLCAIAGALIITLIL), 146–166 (LLAGVALGIICSALMTWAIYF), 184–204 (GGVDWRQSWLMLALIPVLLWI), 240–260 (GWMVGVSVALAGAIGFIGLVI), 274–294 (VLLPGCALAGASALLLADIVA), and 302–322 (ELPIGVVTATLGAPVFIWLLL).

Belongs to the binding-protein-dependent transport system permease family. FecCD subfamily. The complex is composed of two ATP-binding proteins (BtuD), two transmembrane proteins (BtuC) and a solute-binding protein (BtuF).

It localises to the cell inner membrane. Its function is as follows. Part of the ABC transporter complex BtuCDF involved in vitamin B12 import. Involved in the translocation of the substrate across the membrane. This is Vitamin B12 import system permease protein BtuC from Escherichia coli O9:H4 (strain HS).